Consider the following 299-residue polypeptide: Probable endonuclease 4 (299 aa).

The Zn(2+) site is built by His68, His110, Glu145, Asp179, His182, His214, Asp227, His229, and Glu259.

It belongs to the AP endonuclease 2 family. The cofactor is Zn(2+).

The enzyme catalyses Endonucleolytic cleavage to 5'-phosphooligonucleotide end-products.. In terms of biological role, endonuclease IV plays a role in DNA repair. It cleaves phosphodiester bonds at apurinic or apyrimidinic (AP) sites, generating a 3'-hydroxyl group and a 5'-terminal sugar phosphate. The chain is Probable endonuclease 4 from Exiguobacterium sibiricum (strain DSM 17290 / CCUG 55495 / CIP 109462 / JCM 13490 / 255-15).